Here is a 158-residue protein sequence, read N- to C-terminus: Endoribonuclease YbeY (158 aa).

Zn(2+)-binding residues include histidine 118, histidine 122, and histidine 128.

It belongs to the endoribonuclease YbeY family. Requires Zn(2+) as cofactor.

The protein resides in the cytoplasm. Its function is as follows. Single strand-specific metallo-endoribonuclease involved in late-stage 70S ribosome quality control and in maturation of the 3' terminus of the 16S rRNA. The polypeptide is Endoribonuclease YbeY (Alteromonas mediterranea (strain DSM 17117 / CIP 110805 / LMG 28347 / Deep ecotype)).